The primary structure comprises 224 residues: Flagellar L-ring protein (224 aa).

A signal peptide spans 1 to 15 (MARYLVLAVALLLAA). C16 carries N-palmitoyl cysteine lipidation. C16 carries the S-diacylglycerol cysteine lipid modification.

Belongs to the FlgH family. In terms of assembly, the basal body constitutes a major portion of the flagellar organelle and consists of four rings (L,P,S, and M) mounted on a central rod.

It localises to the cell outer membrane. It is found in the bacterial flagellum basal body. In terms of biological role, assembles around the rod to form the L-ring and probably protects the motor/basal body from shearing forces during rotation. In Shewanella baltica (strain OS185), this protein is Flagellar L-ring protein.